Consider the following 251-residue polypeptide: Small ribosomal subunit protein uS2 (251 aa).

Belongs to the universal ribosomal protein uS2 family.

The protein is Small ribosomal subunit protein uS2 (rpsB) of Arthrospira platensis (Spirulina platensis).